A 239-amino-acid chain; its full sequence is 4-hydroxy-tetrahydrodipicolinate reductase (239 aa).

NAD(+) contacts are provided by residues 8 to 13 (GSTGKM), 78 to 80 (GTT), and 102 to 105 (SANM). The active-site Proton donor/acceptor is the H134. Residue H135 coordinates (S)-2,3,4,5-tetrahydrodipicolinate. Catalysis depends on K138, which acts as the Proton donor. 144-145 (GT) is a (S)-2,3,4,5-tetrahydrodipicolinate binding site.

Belongs to the DapB family.

The protein localises to the cytoplasm. The catalysed reaction is (S)-2,3,4,5-tetrahydrodipicolinate + NAD(+) + H2O = (2S,4S)-4-hydroxy-2,3,4,5-tetrahydrodipicolinate + NADH + H(+). The enzyme catalyses (S)-2,3,4,5-tetrahydrodipicolinate + NADP(+) + H2O = (2S,4S)-4-hydroxy-2,3,4,5-tetrahydrodipicolinate + NADPH + H(+). Its pathway is amino-acid biosynthesis; L-lysine biosynthesis via DAP pathway; (S)-tetrahydrodipicolinate from L-aspartate: step 4/4. Catalyzes the conversion of 4-hydroxy-tetrahydrodipicolinate (HTPA) to tetrahydrodipicolinate. The sequence is that of 4-hydroxy-tetrahydrodipicolinate reductase from Rickettsia africae (strain ESF-5).